The following is a 397-amino-acid chain: Phosphoglycerate kinase (397 aa).

Residues 23–25 (DFN), Arg38, 61–64 (HMGK), Arg122, and Arg155 contribute to the substrate site. Residues Lys206, Gly296, Glu327, and 353-356 (GGDS) contribute to the ATP site.

It belongs to the phosphoglycerate kinase family. As to quaternary structure, monomer.

Its subcellular location is the cytoplasm. It catalyses the reaction (2R)-3-phosphoglycerate + ATP = (2R)-3-phospho-glyceroyl phosphate + ADP. It functions in the pathway carbohydrate degradation; glycolysis; pyruvate from D-glyceraldehyde 3-phosphate: step 2/5. In Clostridium perfringens (strain ATCC 13124 / DSM 756 / JCM 1290 / NCIMB 6125 / NCTC 8237 / Type A), this protein is Phosphoglycerate kinase.